The sequence spans 240 residues: Uridylate kinase (240 aa).

13-16 (KLSG) provides a ligand contact to ATP. Residues 21–26 (GDKGFG) form an involved in allosteric activation by GTP region. Position 55 (Gly55) interacts with UMP. Positions 56 and 60 each coordinate ATP. UMP is bound by residues Asp75 and 136 to 143 (IGNPYFST). 3 residues coordinate ATP: Asn164, Tyr170, and Asp173.

It belongs to the UMP kinase family. As to quaternary structure, homohexamer.

Its subcellular location is the cytoplasm. The enzyme catalyses UMP + ATP = UDP + ADP. The protein operates within pyrimidine metabolism; CTP biosynthesis via de novo pathway; UDP from UMP (UMPK route): step 1/1. Allosterically activated by GTP. Inhibited by UTP. Its function is as follows. Catalyzes the reversible phosphorylation of UMP to UDP. The polypeptide is Uridylate kinase (Staphylococcus haemolyticus (strain JCSC1435)).